An 83-amino-acid polypeptide reads, in one-letter code: Bowman-Birk type proteinase inhibitor (83 aa).

Intrachain disulfides connect C18/C72, C19/C34, C22/C68, C24/C32, C42/C49, C46/C61, and C51/C59.

This sequence belongs to the Bowman-Birk serine protease inhibitor family.

The protein is Bowman-Birk type proteinase inhibitor of Phaseolus lunatus (Lima bean).